Reading from the N-terminus, the 419-residue chain is UDP-N-acetylglucosamine 1-carboxyvinyltransferase (419 aa).

22–23 is a phosphoenolpyruvate binding site; that stretch reads KN. A UDP-N-acetyl-alpha-D-glucosamine-binding site is contributed by Arg-93. Catalysis depends on Cys-117, which acts as the Proton donor. Cys-117 is modified (2-(S-cysteinyl)pyruvic acid O-phosphothioketal). 2 residues coordinate UDP-N-acetyl-alpha-D-glucosamine: Asp-307 and Ile-329.

Belongs to the EPSP synthase family. MurA subfamily.

It is found in the cytoplasm. It carries out the reaction phosphoenolpyruvate + UDP-N-acetyl-alpha-D-glucosamine = UDP-N-acetyl-3-O-(1-carboxyvinyl)-alpha-D-glucosamine + phosphate. The protein operates within cell wall biogenesis; peptidoglycan biosynthesis. Its function is as follows. Cell wall formation. Adds enolpyruvyl to UDP-N-acetylglucosamine. This is UDP-N-acetylglucosamine 1-carboxyvinyltransferase from Pseudoalteromonas atlantica (strain T6c / ATCC BAA-1087).